A 500-amino-acid chain; its full sequence is Protein DETOXIFICATION 24 (500 aa).

The interval 1–20 (MSTQEEMEERLLREGSDAEG) is disordered. 12 consecutive transmembrane segments (helical) span residues 48–67 (SSLFRMTSFGSIIVAQAFIG), 72–92 (LGLAAYALLQSTFIRFLYGLM), 124–144 (IVDMAVTTLFLPFIVLAGPIL), 160–180 (IYPWMIPYVYSLIFTMTIQMY), 188–208 (AIVGVLSTLSLALDLVVTWWC), 225–245 (VGSWAMVLAEFVYIFGGWCPF), 266–286 (ISSGFMICLEYWYMSILVLMA), 298–318 (AFSICQYIYTWELNICLGFLG), 342–362 (VILTISTLMGVIFSALCLAFC), 384–404 (VILAVSILLNSIQPILSGVAV), 411–431 (IVAVVNLASYYAIGIPLGLIL), and 441–461 (GLWSGMLAGIAIQTIILCYII).

It belongs to the multi antimicrobial extrusion (MATE) (TC 2.A.66.1) family.

The protein localises to the membrane. The protein is Protein DETOXIFICATION 24 of Arabidopsis thaliana (Mouse-ear cress).